The sequence spans 168 residues: Transmembrane protein 229b (168 aa).

Topologically, residues 1 to 14 are cytoplasmic; it reads MAPPEPLTALSRWY. The chain crosses the membrane as a helical span at residues 15-35; that stretch reads LYAIHGYFCEVMFTAAWDFVV. At 36 to 40 the chain is on the extracellular side; sequence NYNWK. Residues 41–61 form a helical membrane-spanning segment; sequence FPGVTSVWALFIYGTSILIVE. The Cytoplasmic portion of the chain corresponds to 62–72; that stretch reads KMYLYLKDKCN. The helical transmembrane segment at 73-93 threads the bilayer; the sequence is ILIRCLIYTLWTYIWEFSTGL. Over 94 to 109 the chain is Extracellular; sequence ILRQFNACPWDYSQFD. The helical transmembrane segment at 110 to 130 threads the bilayer; it reads FDFMGLITLEYAIPWFCASFI. Over 131–168 the chain is Cytoplasmic; that stretch reads MEQLVIRNTLRLRFDEHAEPGSPVMSTVSMANGHVKCN.

The protein belongs to the TMEM229 family.

It is found in the membrane. This chain is Transmembrane protein 229b (tmem229b), found in Xenopus tropicalis (Western clawed frog).